A 468-amino-acid chain; its full sequence is Argininosuccinate lyase (468 aa).

The protein belongs to the lyase 1 family. Argininosuccinate lyase subfamily.

It localises to the cytoplasm. The catalysed reaction is 2-(N(omega)-L-arginino)succinate = fumarate + L-arginine. The protein operates within amino-acid biosynthesis; L-arginine biosynthesis; L-arginine from L-ornithine and carbamoyl phosphate: step 3/3. The chain is Argininosuccinate lyase from Paraburkholderia phytofirmans (strain DSM 17436 / LMG 22146 / PsJN) (Burkholderia phytofirmans).